A 388-amino-acid chain; its full sequence is 1D-myo-inositol 2-acetamido-2-deoxy-alpha-D-glucopyranoside deacetylase (388 aa).

The Zn(2+) site is built by His6, Asp9, and His144. The interval Leu369 to Arg388 is disordered.

This sequence belongs to the MshB deacetylase family. Zn(2+) serves as cofactor.

The catalysed reaction is 1D-myo-inositol 2-acetamido-2-deoxy-alpha-D-glucopyranoside + H2O = 1D-myo-inositol 2-amino-2-deoxy-alpha-D-glucopyranoside + acetate. Functionally, catalyzes the deacetylation of 1D-myo-inositol 2-acetamido-2-deoxy-alpha-D-glucopyranoside (GlcNAc-Ins) in the mycothiol biosynthesis pathway. The polypeptide is 1D-myo-inositol 2-acetamido-2-deoxy-alpha-D-glucopyranoside deacetylase (Corynebacterium kroppenstedtii (strain DSM 44385 / JCM 11950 / CIP 105744 / CCUG 35717)).